The sequence spans 232 residues: Phosphoribosylformylglycinamidine synthase subunit PurQ (232 aa).

A Glutamine amidotransferase type-1 domain is found at 2–232 (RIGVITFPGS…SVVRSTLVEA (231 aa)). The Nucleophile role is filled by C85. Active-site residues include H194 and E196.

Part of the FGAM synthase complex composed of 1 PurL, 1 PurQ and 2 PurS subunits.

The protein resides in the cytoplasm. It catalyses the reaction N(2)-formyl-N(1)-(5-phospho-beta-D-ribosyl)glycinamide + L-glutamine + ATP + H2O = 2-formamido-N(1)-(5-O-phospho-beta-D-ribosyl)acetamidine + L-glutamate + ADP + phosphate + H(+). It carries out the reaction L-glutamine + H2O = L-glutamate + NH4(+). Its pathway is purine metabolism; IMP biosynthesis via de novo pathway; 5-amino-1-(5-phospho-D-ribosyl)imidazole from N(2)-formyl-N(1)-(5-phospho-D-ribosyl)glycinamide: step 1/2. Part of the phosphoribosylformylglycinamidine synthase complex involved in the purines biosynthetic pathway. Catalyzes the ATP-dependent conversion of formylglycinamide ribonucleotide (FGAR) and glutamine to yield formylglycinamidine ribonucleotide (FGAM) and glutamate. The FGAM synthase complex is composed of three subunits. PurQ produces an ammonia molecule by converting glutamine to glutamate. PurL transfers the ammonia molecule to FGAR to form FGAM in an ATP-dependent manner. PurS interacts with PurQ and PurL and is thought to assist in the transfer of the ammonia molecule from PurQ to PurL. The polypeptide is Phosphoribosylformylglycinamidine synthase subunit PurQ (Leifsonia xyli subsp. xyli (strain CTCB07)).